We begin with the raw amino-acid sequence, 277 residues long: MVIRSYRAYTLGTRNRSVFEFEKKVRSKPQKKLTFRQHCKKGRNNRGIITSRHRGGGHKRIYRKIDFLRDKKDIFGRIATIEYDPNRNTFICLTYYEDGEKKYILYPQGMRIGDSVVSSTEAPISIGNALPLTNMPLGTAIHNVEITPGKGGQLARAAGAVAKIIAKEGRLATLRLPSGEVRLISQKCLATIGQVGNSDANNRTIGKAGSKRWLGKRPKVRGVVMNPIDHPHGGGEGRAPIGRKKPLTPWGHPALGRKTRRNKKYSDILIVRRRKNN.

The interval 224–257 (VMNPIDHPHGGGEGRAPIGRKKPLTPWGHPALGR) is disordered.

This sequence belongs to the universal ribosomal protein uL2 family. Part of the 50S ribosomal subunit.

It localises to the plastid. It is found in the chloroplast. This Anthoceros angustus (Hornwort) protein is Large ribosomal subunit protein uL2c (rpl2).